The chain runs to 245 residues: Dehydrogenase/reductase SDR family member 6 (245 aa).

NAD(+)-binding positions include 16–18 (QGI), aspartate 37, and aspartate 58. Position 144 (arginine 144) interacts with substrate. Tyrosine 147 functions as the Proton acceptor in the catalytic mechanism. NAD(+)-binding positions include lysine 151 and 180-184 (VDTPS). Residues arginine 188 and arginine 205 each contribute to the substrate site.

It belongs to the short-chain dehydrogenases/reductases (SDR) family. Homotetramer.

Its subcellular location is the cytoplasm. It catalyses the reaction cis-4-hydroxy-L-proline + NAD(+) = 4-oxo-L-proline + NADH + H(+). The catalysed reaction is (R)-3-hydroxybutanoate + NAD(+) = acetoacetate + NADH + H(+). Its pathway is amino-acid metabolism. It functions in the pathway siderophore biosynthesis. NAD(H)-dependent dehydrogenase/reductase with a preference for cyclic substrates. Catalyzes stereoselective conversion of 4-oxo-L-proline to cis-4-hydroxy-L-proline, likely a detoxification mechanism for ketoprolines. Mediates the formation of 2,5-dihydroxybenzoate (2,5-DHBA), a siderophore that chelates free cytoplasmic iron, thereby regulating iron transport and homeostasis while protecting cells against free radical-induced oxidative stress. The iron-siderophore complex is imported into mitochondria, providing an iron source for mitochondrial metabolic processes in particular heme synthesis. May act as a 3-hydroxybutyrate dehydrogenase. In Danio rerio (Zebrafish), this protein is Dehydrogenase/reductase SDR family member 6 (bdh2).